A 301-amino-acid chain; its full sequence is Acetylglutamate kinase (301 aa).

Substrate is bound by residues 72-73 (GG), arginine 94, and asparagine 199.

Belongs to the acetylglutamate kinase family. ArgB subfamily.

It localises to the cytoplasm. The enzyme catalyses N-acetyl-L-glutamate + ATP = N-acetyl-L-glutamyl 5-phosphate + ADP. Its pathway is amino-acid biosynthesis; L-arginine biosynthesis; N(2)-acetyl-L-ornithine from L-glutamate: step 2/4. In terms of biological role, catalyzes the ATP-dependent phosphorylation of N-acetyl-L-glutamate. In Bartonella tribocorum (strain CIP 105476 / IBS 506), this protein is Acetylglutamate kinase.